Here is a 64-residue protein sequence, read N- to C-terminus: Sulfur carrier protein ThiS (64 aa).

Position 64 is a 1-thioglycine; alternate (Gly64). Gly64 carries the post-translational modification Glycyl adenylate; alternate. Gly64 is covalently cross-linked (Glycyl cysteine thioester (Gly-Cys) (interchain with C-192 in TtuC); alternate).

This sequence belongs to the sulfur carrier protein ThiS family. C-terminal thiocarboxylation occurs in 2 steps, it is first acyl-adenylated (-COAMP) by TtuC, then thiocarboxylated (-COSH) by the cysteine desulfurases IscS or SufS.

It participates in cofactor biosynthesis; thiamine diphosphate biosynthesis. Its function is as follows. Is the sulfur donor in the synthesis of the thiazole phosphate moiety of thiamine phosphate. The protein is Sulfur carrier protein ThiS of Thermus thermophilus (strain ATCC BAA-163 / DSM 7039 / HB27).